The sequence spans 757 residues: Exo-alpha-(1-&gt;6)-L-arabinopyranosidase (757 aa).

D232 is an active-site residue.

Belongs to the glycosyl hydrolase 3 family. Homotetramer.

With respect to regulation, completely inhibited by Cu(2+) and Fe(2+). Functionally, catalyzes the hydrolysis of a non-reducing terminal alpha-L-arabinopyranosidic linkage in ginsenoside Rb2 (alpha-L-arabinopyranosyl-(1-&gt;6)-alpha-D-glucopyranosyl) to release alpha-D-glucopyranosyl (Rd). It is not able to hydrolyze alpha-L-arabinofuranosyl-(1-&gt;6)-alpha-D-glucopyranosyl (Rc). In Bifidobacterium breve (strain ACS-071-V-Sch8b), this protein is Exo-alpha-(1-&gt;6)-L-arabinopyranosidase.